We begin with the raw amino-acid sequence, 323 residues long: Putative HTH-type transcriptional regulatory protein Mbur_1811 (323 aa).

Residues 132–190 (LKEARMNVSMSLGALASELGVSRRTISKYEEGQMDASIDIVLHLEEILDMALAKSIDIL) form the HTH cro/C1-type domain. Positions 143 to 162 (LGALASELGVSRRTISKYEE) form a DNA-binding region, H-T-H motif.

The protein is Putative HTH-type transcriptional regulatory protein Mbur_1811 of Methanococcoides burtonii (strain DSM 6242 / NBRC 107633 / OCM 468 / ACE-M).